A 758-amino-acid polypeptide reads, in one-letter code: Probable adenosylcobalamin-dependent ribonucleoside-triphosphate reductase (758 aa).

Cys194 and Cys459 form a disulfide bridge. The tract at residues 233–256 (IIIKGQLPPPPPQQQPQQQQQQHG) is disordered. Residues Cys448 and Glu450 contribute to the active site.

This sequence belongs to the class II ribonucleoside-triphosphate reductase family. In terms of assembly, monomer. The cofactor is adenosylcob(III)alamin.

The enzyme catalyses a 2'-deoxyribonucleoside 5'-triphosphate + [thioredoxin]-disulfide + H2O = a ribonucleoside 5'-triphosphate + [thioredoxin]-dithiol. The chain is Probable adenosylcobalamin-dependent ribonucleoside-triphosphate reductase (rtpR) from Dictyostelium discoideum (Social amoeba).